The primary structure comprises 376 residues: Alcohol dehydrogenase class-3 (376 aa).

The Zn(2+) site is built by C47, H69, C99, C102, C105, C113, and C176.

This sequence belongs to the zinc-containing alcohol dehydrogenase family. Class-III subfamily. Homodimer. Zn(2+) is required as a cofactor. Expressed in the skeletal muscle, heart, gill filaments and liver, with highest levels in the kidney.

The protein localises to the cytoplasm. It catalyses the reaction a primary alcohol + NAD(+) = an aldehyde + NADH + H(+). It carries out the reaction a secondary alcohol + NAD(+) = a ketone + NADH + H(+). The catalysed reaction is S-(hydroxymethyl)glutathione + NADP(+) = S-formylglutathione + NADPH + H(+). The enzyme catalyses S-(hydroxymethyl)glutathione + NAD(+) = S-formylglutathione + NADH + H(+). It catalyses the reaction S-nitrosoglutathione + NADH + H(+) = S-(hydroxysulfenamide)glutathione + NAD(+). Class-III ADH is remarkably ineffective in oxidizing ethanol, but it readily catalyzes the oxidation of long-chain primary alcohols and the oxidation of S-(hydroxymethyl) glutathione. Also acts as a S-nitroso-glutathione reductase by catalyzing the NADH-dependent reduction of S-nitrosoglutathione, thereby regulating protein S-nitrosylation. The sequence is that of Alcohol dehydrogenase class-3 from Sparus aurata (Gilthead sea bream).